Reading from the N-terminus, the 506-residue chain is Probable E3 ubiquitin-protein ligase ARI14 (506 aa).

The segment at 79-308 (PDSSSEISLE…VDSGFCIKTE (230 aa)) is TRIAD supradomain. An RING-type 1 zinc finger spans residues 83–140 (SEISLETDVYEFDGDNDLISMPFCSHKFDSKYWREYLEKNFYYVEKIQTTISCPDQDC). Zn(2+)-binding residues include cysteine 106, histidine 108, cysteine 135, cysteine 140, cysteine 180, cysteine 185, cysteine 207, cysteine 209, cysteine 214, cysteine 217, histidine 222, cysteine 227, cysteine 258, cysteine 261, cysteine 277, cysteine 279, cysteine 284, cysteine 287, histidine 294, and cysteine 304. Residues 158–227 (EMYERYIWRS…RLESHRPVSC (70 aa)) form an IBR-type zinc finger. An RING-type 2; atypical zinc finger spans residues 258–287 (CPHCLCSLESDTKMPQFLTCVCRLRFCSRC). The RanBP2-type zinc-finger motif lies at 462–492 (GTGPFWYCDRCTYANTWEDNECEMCYDDSAS).

It belongs to the RBR family. Ariadne subfamily. Requires Zn(2+) as cofactor. As to expression, mostly expressed in closed flowers and, to a lower extent, in pollen.

The enzyme catalyses [E2 ubiquitin-conjugating enzyme]-S-ubiquitinyl-L-cysteine + [acceptor protein]-L-lysine = [E2 ubiquitin-conjugating enzyme]-L-cysteine + [acceptor protein]-N(6)-ubiquitinyl-L-lysine.. It functions in the pathway protein modification; protein ubiquitination. Functionally, might act as an E3 ubiquitin-protein ligase, or as part of E3 complex, which accepts ubiquitin from specific E2 ubiquitin-conjugating enzymes and then transfers it to substrates. Negatively regulates male gametophyte formation and double fertilization. The protein is Probable E3 ubiquitin-protein ligase ARI14 of Arabidopsis thaliana (Mouse-ear cress).